The sequence spans 217 residues: Small ribosomal subunit protein uS3 (217 aa).

A KH type-2 domain is found at 40 to 110 (IRDLINKGFN…EVYINIHEVR (71 aa)).

It belongs to the universal ribosomal protein uS3 family. In terms of assembly, part of the 30S ribosomal subunit. Forms a tight complex with proteins S10 and S14.

In terms of biological role, binds the lower part of the 30S subunit head. Binds mRNA in the 70S ribosome, positioning it for translation. This is Small ribosomal subunit protein uS3 from Rickettsia akari (strain Hartford).